Here is a 357-residue protein sequence, read N- to C-terminus: UDP-N-acetylglucosamine--N-acetylmuramyl-(pentapeptide) pyrophosphoryl-undecaprenol N-acetylglucosamine transferase (357 aa).

Residues 12–14, Arg166, Ser196, and Gln291 contribute to the UDP-N-acetyl-alpha-D-glucosamine site; that span reads TAG.

This sequence belongs to the glycosyltransferase 28 family. MurG subfamily.

Its subcellular location is the cell membrane. It carries out the reaction di-trans,octa-cis-undecaprenyl diphospho-N-acetyl-alpha-D-muramoyl-L-alanyl-D-glutamyl-meso-2,6-diaminopimeloyl-D-alanyl-D-alanine + UDP-N-acetyl-alpha-D-glucosamine = di-trans,octa-cis-undecaprenyl diphospho-[N-acetyl-alpha-D-glucosaminyl-(1-&gt;4)]-N-acetyl-alpha-D-muramoyl-L-alanyl-D-glutamyl-meso-2,6-diaminopimeloyl-D-alanyl-D-alanine + UDP + H(+). The protein operates within cell wall biogenesis; peptidoglycan biosynthesis. Its function is as follows. Cell wall formation. Catalyzes the transfer of a GlcNAc subunit on undecaprenyl-pyrophosphoryl-MurNAc-pentapeptide (lipid intermediate I) to form undecaprenyl-pyrophosphoryl-MurNAc-(pentapeptide)GlcNAc (lipid intermediate II). In Geobacillus kaustophilus (strain HTA426), this protein is UDP-N-acetylglucosamine--N-acetylmuramyl-(pentapeptide) pyrophosphoryl-undecaprenol N-acetylglucosamine transferase.